Here is a 377-residue protein sequence, read N- to C-terminus: cAMP-dependent protein kinase type II regulatory subunit (377 aa).

The segment covering 48-69 (ERPSVSHTDQSTDDQLSVNSQD) has biased composition (polar residues). Residues 48–78 (ERPSVSHTDQSTDDQLSVNSQDADAEPPVMA) are disordered. Ser51, Ser58, Ser64, Ser67, and Ser84 each carry phosphoserine. Positions 81-85 (RRKSV) match the Pseudophosphorylation motif motif. Residue Tyr90 is modified to Phosphotyrosine. Residues 124-239 (LFRS…LLNS), Glu189, Arg198, 242-362 (MLKA…YESQ), Glu311, and Arg320 contribute to the 3',5'-cyclic AMP site.

Belongs to the cAMP-dependent kinase regulatory chain family. Tetramer, composed of 2 regulatory (R) and 2 catalytic (C) subunits. In the presence of cAMP it dissociates into 2 active monomeric C subunits and an R dimer. Interacts with Akap200. Post-translationally, the pseudophosphorylation site binds to the substrate-binding region of the catalytic chain but is not phosphorylated. The physiological significance of phosphorylations by other kinases is unclear. Detected in follicle cells, germline-derived cells, germline line stem cells and outer rim of ring canals of nurse cells throughout oogenesis (at protein level).

Its subcellular location is the cytoplasm. The protein localises to the cell membrane. Regulatory subunit of the cAMP-dependent protein kinases involved in cAMP signaling in cells. Mediates membrane association by binding to anchoring proteins, such as Akap200. Might play an essential role in the regulation of neuronal activity in the brain. The sequence is that of cAMP-dependent protein kinase type II regulatory subunit (Pka-R2) from Drosophila melanogaster (Fruit fly).